Reading from the N-terminus, the 1309-residue chain is Disease resistance protein RPP2A (1309 aa).

The 165-residue stretch at 9 to 173 (RRYDVFPSFS…MVADDVSKKL (165 aa)) folds into the TIR 1 domain. The active site involves Glu84. The NB-ARC 1 domain maps to 187 to 418 (EAHLEAMSSI…FKKTLRNYLP (232 aa)). One can recognise an ALOG domain in the interval 488–585 (PNRRHSNDDW…KECILVFSCH (98 aa)). The 164-residue stretch at 574–737 (REKECILVFS…EVVRNASLRL (164 aa)) folds into the TIR 2 domain. The NB-ARC 2 domain maps to 755 to 987 (SQSTDVEIMG…IFLDLACFFR (233 aa)). Residues 1114 to 1141 (LPHGLDTLPDELSLLHWENYPLVYLPQK) are a coiled coil. 6 LRR repeats span residues 1145–1167 (VNLVELNMPYSNMEKLWEGKKNL), 1168–1195 (EKLKNIKLSHSRELTDILMLSEALNLEH), 1214–1237 (CGKLVSLNMKDCSRLRSLPSMVDL), 1238–1258 (TTLKLLNLSGCSEFEDIQDFA), 1259–1283 (PNLEEIYLAGTSIRELPLSIRNLTE), and 1285–1307 (VTLDLENCERLQEMPSLPVEIIR).

Belongs to the disease resistance TIR-NB-LRR family.

It carries out the reaction NAD(+) + H2O = ADP-D-ribose + nicotinamide + H(+). Its function is as follows. Disease resistance protein that cooperates with RPP2B to confer resistance to Hyaloperonospora parasitica isolate Cala2. The sequence is that of Disease resistance protein RPP2A from Arabidopsis thaliana (Mouse-ear cress).